The chain runs to 304 residues: Large ribosomal subunit protein uL18z (304 aa).

Positions 285–304 (LNALNSSAGADDDDEEEDDE) are disordered. Positions 294–304 (ADDDDEEEDDE) are enriched in acidic residues.

Belongs to the universal ribosomal protein uL18 family. As to quaternary structure, component of the large ribosomal subunit (LSU).

The protein localises to the cytoplasm. The protein resides in the nucleus. Functionally, component of the ribosome, a large ribonucleoprotein complex responsible for the synthesis of proteins in the cell. The small ribosomal subunit (SSU) binds messenger RNAs (mRNAs) and translates the encoded message by selecting cognate aminoacyl-transfer RNA (tRNA) molecules. The large subunit (LSU) contains the ribosomal catalytic site termed the peptidyl transferase center (PTC), which catalyzes the formation of peptide bonds, thereby polymerizing the amino acids delivered by tRNAs into a polypeptide chain. The nascent polypeptides leave the ribosome through a tunnel in the LSU and interact with protein factors that function in enzymatic processing, targeting, and the membrane insertion of nascent chains at the exit of the ribosomal tunnel. The chain is Large ribosomal subunit protein uL18z (RPL5A) from Oryza sativa subsp. japonica (Rice).